Reading from the N-terminus, the 212-residue chain is Sclerostin (212 aa).

An N-terminal signal peptide occupies residues 1-23 (MQLSLALCLVCLLVHAAFRVVEG). The N-linked (GlcNAc...) asparagine glycan is linked to N52. Intrachain disulfides connect C79/C133, C93/C147, C104/C164, and C108/C166. A CTCK domain is found at 81-171 (ELHFTRYVTD…ASCKCKRLTR (91 aa)). The N-linked (GlcNAc...) asparagine glycan is linked to N174. Residues 179–212 (KDFGPEAARPQTGRKLRPRARGTKASRAELENAY) form a disordered region. Over residues 190–202 (TGRKLRPRARGTK) the composition is skewed to basic residues.

Belongs to the sclerostin family. Interacts with LRP4 (via the extracellular domain); the interaction facilitates the inhibition of Wnt signaling. Interacts with LRP5 (via the first two YWTD-EGF repeat domains); the interaction inhibits Wnt-mediated signaling. Interacts with LRP6.

It is found in the secreted. The protein resides in the extracellular space. The protein localises to the extracellular matrix. Functionally, negative regulator of bone growth that acts through inhibition of Wnt signaling and bone formation. This chain is Sclerostin, found in Bos taurus (Bovine).